We begin with the raw amino-acid sequence, 129 residues long: UPF0325 protein PC1_0937 (129 aa).

Belongs to the UPF0325 family.

The polypeptide is UPF0325 protein PC1_0937 (Pectobacterium carotovorum subsp. carotovorum (strain PC1)).